The chain runs to 477 residues: Glycogen synthase (477 aa).

Lysine 15 is a binding site for ADP-alpha-D-glucose.

It belongs to the glycosyltransferase 1 family. Bacterial/plant glycogen synthase subfamily.

The enzyme catalyses [(1-&gt;4)-alpha-D-glucosyl](n) + ADP-alpha-D-glucose = [(1-&gt;4)-alpha-D-glucosyl](n+1) + ADP + H(+). It functions in the pathway glycan biosynthesis; glycogen biosynthesis. In terms of biological role, synthesizes alpha-1,4-glucan chains using ADP-glucose. This chain is Glycogen synthase, found in Streptococcus pneumoniae serotype 4 (strain ATCC BAA-334 / TIGR4).